We begin with the raw amino-acid sequence, 357 residues long: Biotin synthase (357 aa).

Residues 41 to 268 (NEVQISRLLS…KSRVRLSAGR (228 aa)) enclose the Radical SAM core domain. The [4Fe-4S] cluster site is built by Cys-56, Cys-60, and Cys-63. [2Fe-2S] cluster-binding residues include Cys-100, Cys-131, Cys-191, and Arg-263.

This sequence belongs to the radical SAM superfamily. Biotin synthase family. Homodimer. The cofactor is [4Fe-4S] cluster. [2Fe-2S] cluster serves as cofactor.

It catalyses the reaction (4R,5S)-dethiobiotin + (sulfur carrier)-SH + 2 reduced [2Fe-2S]-[ferredoxin] + 2 S-adenosyl-L-methionine = (sulfur carrier)-H + biotin + 2 5'-deoxyadenosine + 2 L-methionine + 2 oxidized [2Fe-2S]-[ferredoxin]. The protein operates within cofactor biosynthesis; biotin biosynthesis; biotin from 7,8-diaminononanoate: step 2/2. Catalyzes the conversion of dethiobiotin (DTB) to biotin by the insertion of a sulfur atom into dethiobiotin via a radical-based mechanism. The protein is Biotin synthase of Shewanella denitrificans (strain OS217 / ATCC BAA-1090 / DSM 15013).